Reading from the N-terminus, the 107-residue chain is U1-lycotoxin-Ls1s (107 aa).

A signal peptide spans 1-20; sequence MMKVLVVVALLVTLISYSSS. The propeptide occupies 21-41; it reads EGIDDLEADELLSLMANEQTR. 4 disulfides stabilise this stretch: cysteine 44/cysteine 59, cysteine 51/cysteine 68, cysteine 58/cysteine 86, and cysteine 70/cysteine 84.

This sequence belongs to the neurotoxin 19 (CSTX) family. 04 (U1-Lctx) subfamily. As to expression, expressed by the venom gland.

The protein resides in the secreted. The polypeptide is U1-lycotoxin-Ls1s (Lycosa singoriensis (Wolf spider)).